A 470-amino-acid polypeptide reads, in one-letter code: Serine/threonine-protein kinase PEPKR2 (470 aa).

One can recognise a Protein kinase domain in the interval 107–355 (YVFGRNIGKG…ADEVLRHPWI (249 aa)). ATP-binding positions include 113–121 (IGKGKFGSV) and Lys-136. The active-site Proton acceptor is the Asp-224. Residues 377–386 (GSSTCLQNRS) show a composition bias toward polar residues. Disordered stretches follow at residues 377 to 419 (GSST…EEED) and 441 to 464 (RSRV…TSTS). Over residues 387–403 (PTEKTDLNRADREKKIP) the composition is skewed to basic and acidic residues. Positions 445–464 (CSPTNNPIEQQHSSNLTSTS) are enriched in polar residues.

This sequence belongs to the protein kinase superfamily. Ser/Thr protein kinase family.

The catalysed reaction is L-seryl-[protein] + ATP = O-phospho-L-seryl-[protein] + ADP + H(+). It carries out the reaction L-threonyl-[protein] + ATP = O-phospho-L-threonyl-[protein] + ADP + H(+). In Arabidopsis thaliana (Mouse-ear cress), this protein is Serine/threonine-protein kinase PEPKR2 (PEPKR2).